Reading from the N-terminus, the 119-residue chain is Inner membrane protein YijD (119 aa).

Topologically, residues 1 to 8 (MKQANQDR) are cytoplasmic. The helical transmembrane segment at 9–28 (GTLLLALVAGLSINGTFAAL) threads the bilayer. At 29–31 (FSS) the chain is on the periplasmic side. The chain crosses the membrane as a helical span at residues 32–50 (IVPFSVFPIISLVLTVYCL). Topologically, residues 51-61 (HQRYLNRTMPV) are cytoplasmic. Residues 62 to 84 (GLPGLAAACFILGVLLYSTVVRA) traverse the membrane as a helical segment. Residues 85–88 (EYPD) lie on the Periplasmic side of the membrane. Residues 89–108 (IGSNFFPAVLSVIMVFWIGA) traverse the membrane as a helical segment. Residues 109-119 (KMRNRKQEVAE) are Cytoplasmic-facing.

It is found in the cell inner membrane. The protein is Inner membrane protein YijD (yijD) of Escherichia coli O6:H1 (strain CFT073 / ATCC 700928 / UPEC).